We begin with the raw amino-acid sequence, 445 residues long: Trigger factor (445 aa).

The PPIase FKBP-type domain maps to 164-249 (GDQVTFDFEG…VKKVEEAKLP (86 aa)).

Belongs to the FKBP-type PPIase family. Tig subfamily.

The protein localises to the cytoplasm. It catalyses the reaction [protein]-peptidylproline (omega=180) = [protein]-peptidylproline (omega=0). Functionally, involved in protein export. Acts as a chaperone by maintaining the newly synthesized protein in an open conformation. Functions as a peptidyl-prolyl cis-trans isomerase. This Psychrobacter sp. (strain PRwf-1) protein is Trigger factor.